The chain runs to 227 residues: NAD(P)H-quinone oxidoreductase subunit K, chloroplastic (227 aa).

Residues Cys-43, Cys-44, Cys-108, and Cys-139 each coordinate [4Fe-4S] cluster. Over residues 173–192 the composition is skewed to polar residues; the sequence is RSFTTNHKFQVGRSSHTGNY. The tract at residues 173 to 201 is disordered; it reads RSFTTNHKFQVGRSSHTGNYDQGFLSKPP.

The protein belongs to the complex I 20 kDa subunit family. In terms of assembly, NDH is composed of at least 16 different subunits, 5 of which are encoded in the nucleus. [4Fe-4S] cluster is required as a cofactor.

The protein localises to the plastid. The protein resides in the chloroplast thylakoid membrane. The catalysed reaction is a plastoquinone + NADH + (n+1) H(+)(in) = a plastoquinol + NAD(+) + n H(+)(out). The enzyme catalyses a plastoquinone + NADPH + (n+1) H(+)(in) = a plastoquinol + NADP(+) + n H(+)(out). Functionally, NDH shuttles electrons from NAD(P)H:plastoquinone, via FMN and iron-sulfur (Fe-S) centers, to quinones in the photosynthetic chain and possibly in a chloroplast respiratory chain. The immediate electron acceptor for the enzyme in this species is believed to be plastoquinone. Couples the redox reaction to proton translocation, and thus conserves the redox energy in a proton gradient. In Trachelium caeruleum (Blue throatwort), this protein is NAD(P)H-quinone oxidoreductase subunit K, chloroplastic.